Reading from the N-terminus, the 458-residue chain is RuvB-like helicase 1 (458 aa).

Residue 71–78 (GGPGTGKT) coordinates ATP.

It belongs to the RuvB family. May form heterododecamers with RVB2. Component of the SWR1 chromatin remodeling complex, the INO80 chromatin remodeling complex, and of the R2TP complex.

The protein resides in the nucleus. It carries out the reaction ATP + H2O = ADP + phosphate + H(+). In terms of biological role, DNA helicase which participates in several chromatin remodeling complexes, including the SWR1 and the INO80 complexes. The SWR1 complex mediates the ATP-dependent exchange of histone H2A for the H2A variant HZT1 leading to transcriptional regulation of selected genes by chromatin remodeling. The INO80 complex remodels chromatin by shifting nucleosomes and is involved in DNA repair. Also involved in pre-rRNA processing. This is RuvB-like helicase 1 (RVB1) from Gibberella zeae (strain ATCC MYA-4620 / CBS 123657 / FGSC 9075 / NRRL 31084 / PH-1) (Wheat head blight fungus).